A 680-amino-acid polypeptide reads, in one-letter code: PAN2-PAN3 deadenylation complex subunit PAN3 (680 aa).

3 disordered regions span residues 1–26 (MATT…RADT), 51–87 (HDQT…SKKT), and 99–120 (FTPR…TDIP). The segment at 25–54 (DTKDTLCRNILIYGHCRYEDAGCAFNHDQT) adopts a C3H1-type zinc-finger fold. The segment covering 52-64 (DQTKKSPKPDATT) has biased composition (basic and acidic residues). The PABPC-interacting motif-2 (PAM-2) signature appears at 62 to 82 (ATTRKTLNVDSAPFTPAVSSQ). Residues 99–117 (FTPRATAATPTGTPTAQET) show a composition bias toward low complexity. A pseudokinase domain region spans residues 256 to 522 (QTMTGTAALQ…TVKNLVAGIN (267 aa)). ATP is bound by residues Arg311, 360-367 (EYYPLAET), and 422-423 (TK). Residues 523–561 (EHVMTAFDAQQRQSDMLYSELYREVENGRVLRLLMKLAT) are a coiled coil. A knob domain region spans residues 562-680 (INERTEYDKD…VHHPSHRDRF (119 aa)). Positions 655–669 (SGNGRGGPVASGSGH) are enriched in gly residues. The interval 655 to 680 (SGNGRGGPVASGSGHGVHHPSHRDRF) is disordered. Positions 670 to 680 (GVHHPSHRDRF) are enriched in basic residues.

The protein belongs to the protein kinase superfamily. PAN3 family. As to quaternary structure, homodimer. Forms a heterotrimer with a catalytic subunit PAN2 to form the poly(A)-nuclease (PAN) deadenylation complex. Interacts (via PAM-2 motif) with poly(A)-binding protein PAB1 (via PABC domain), conferring substrate specificity of the enzyme complex.

The protein localises to the cytoplasm. In terms of biological role, regulatory subunit of the poly(A)-nuclease (PAN) deadenylation complex, one of two cytoplasmic mRNA deadenylases involved in mRNA turnover. PAN specifically shortens poly(A) tails of RNA and the activity is stimulated by poly(A)-binding protein PAB1. PAN deadenylation is followed by rapid degradation of the shortened mRNA tails by the CCR4-NOT complex. Deadenylated mRNAs are then degraded by two alternative mechanisms, namely exosome-mediated 3'-5' exonucleolytic degradation, or deadenylation-dependent mRNA decaping and subsequent 5'-3' exonucleolytic degradation by XRN1. May also be involved in post-transcriptional maturation of mRNA poly(A) tails. PAN3 acts as a positive regulator for PAN activity, recruiting the catalytic subunit PAN2 to mRNA via its interaction with RNA and with PAB1. This chain is PAN2-PAN3 deadenylation complex subunit PAN3, found in Pyricularia oryzae (strain 70-15 / ATCC MYA-4617 / FGSC 8958) (Rice blast fungus).